The following is a 322-amino-acid chain: Putative heme-binding peroxidase (322 aa).

The Proton acceptor role is filled by His38. His162 contacts heme b. The Tryptophan radical intermediate role is filled by Trp178. Residues 288-322 (ISAPKKSNHPTGPAKGAQGGCPVAASQGGCPRAKL) are disordered.

It belongs to the peroxidase family. Cytochrome c peroxidase subfamily. Heme b is required as a cofactor.

In terms of biological role, destroys radicals which are normally produced within the cells and which are toxic to biological systems. The sequence is that of Putative heme-binding peroxidase from Aspergillus fumigatus (strain ATCC MYA-4609 / CBS 101355 / FGSC A1100 / Af293) (Neosartorya fumigata).